A 366-amino-acid chain; its full sequence is tRNA/tmRNA (uracil-C(5))-methyltransferase (366 aa).

Residues Gln190, Tyr218, Asn223, Glu239, and Asp299 each contribute to the S-adenosyl-L-methionine site. Cys324 (nucleophile) is an active-site residue. Glu358 serves as the catalytic Proton acceptor.

The protein belongs to the class I-like SAM-binding methyltransferase superfamily. RNA M5U methyltransferase family. TrmA subfamily.

It catalyses the reaction uridine(54) in tRNA + S-adenosyl-L-methionine = 5-methyluridine(54) in tRNA + S-adenosyl-L-homocysteine + H(+). The enzyme catalyses uridine(341) in tmRNA + S-adenosyl-L-methionine = 5-methyluridine(341) in tmRNA + S-adenosyl-L-homocysteine + H(+). Its function is as follows. Dual-specificity methyltransferase that catalyzes the formation of 5-methyluridine at position 54 (m5U54) in all tRNAs, and that of position 341 (m5U341) in tmRNA (transfer-mRNA). The polypeptide is tRNA/tmRNA (uracil-C(5))-methyltransferase (Edwardsiella ictaluri (strain 93-146)).